The primary structure comprises 315 residues: Methionyl-tRNA formyltransferase (315 aa).

113 to 116 contacts (6S)-5,6,7,8-tetrahydrofolate; it reads SLLP.

This sequence belongs to the Fmt family.

The catalysed reaction is L-methionyl-tRNA(fMet) + (6R)-10-formyltetrahydrofolate = N-formyl-L-methionyl-tRNA(fMet) + (6S)-5,6,7,8-tetrahydrofolate + H(+). In terms of biological role, attaches a formyl group to the free amino group of methionyl-tRNA(fMet). The formyl group appears to play a dual role in the initiator identity of N-formylmethionyl-tRNA by promoting its recognition by IF2 and preventing the misappropriation of this tRNA by the elongation apparatus. The chain is Methionyl-tRNA formyltransferase from Escherichia coli (strain SMS-3-5 / SECEC).